A 60-amino-acid polypeptide reads, in one-letter code: Arabinogalactan protein 14 (60 aa).

Positions 1 to 28 are cleaved as a signal peptide; the sequence is MEAMKMKLYVVVLVAVIAFSTVHQTVAA. A 4-hydroxyproline mark is found at P32, P34, and P36. Residues P32, P34, and P36 are each glycosylated (O-linked (Ara...) hydroxyproline). The GPI-anchor amidated serine moiety is linked to residue S38. Positions 39 to 60 are cleaved as a propeptide — removed in mature form; sequence DASSFIPTFFASVAVMAFGFFF.

Belongs to the AG-peptide AGP family. Contains 4-hydroxyproline; hydroxylated on Pro-32, Pro-34 and Pro-36. In terms of processing, O-glycosylated on hydroxyprolines; noncontiguous hydroxylproline residues are glycosylated with arabinogalactan.

It localises to the cell membrane. In terms of biological role, proteoglycan that seems to be implicated in diverse developmental roles such as differentiation, cell-cell recognition, embryogenesis and programmed cell death. Involved in the regulation of root hair elongation. This is Arabinogalactan protein 14 from Arabidopsis thaliana (Mouse-ear cress).